A 187-amino-acid polypeptide reads, in one-letter code: MRLRLLVSAGMLLVALSSCLPCRALLSRGSVPRAPRAPQPLNFLQPEQPQQPQPVLIRMGEEYFLRLGNLNRSPAARLSPNSTPLTAGRGSRPSHDQAAANFFRVLLQQLQMPQRSLDSRAEPAERGAEDALGGHQGALERERRSEEPPISLDLTFHLLREVLEMARAEQLAQQAHSNRKLMEIIGK.

The N-terminal stretch at methionine 1–cysteine 19 is a signal peptide. Residues leucine 20–arginine 144 constitute a propeptide that is removed on maturation. Disordered stretches follow at residues alanine 75–serine 94 and glutamine 114–glutamate 146. Residues leucine 117–glutamate 129 show a composition bias toward basic and acidic residues. Isoleucine 185 is subject to Isoleucine amide.

It belongs to the sauvagine/corticotropin-releasing factor/urotensin I family. Interacts (via C-terminus) with CRFR1 (via N-terminal extracellular domain). As to expression, expressed in parvocellular paraventricular nucleus of the hypothalamus and in medial accessory olivary nucleus.

The protein resides in the secreted. In terms of biological role, hormone regulating the release of corticotropin from pituitary gland. Induces NLRP6 in intestinal epithelial cells, hence may influence gut microbiota profile. This is Corticoliberin (Crh) from Mus musculus (Mouse).